Consider the following 180-residue polypeptide: Calcium-binding protein E (180 aa).

EF-hand domains are found at residues 3–38, 40–76, 85–120, and 139–174; these read KVEA…NSNI, DPLA…KKIK, ALRS…DPDF, and RAKS…HPEF. Residues Asp16, Asp18, Asp20, Asn22, and Glu27 each contribute to the Ca(2+) site. The Ca(2+) site is built by Asp98, Asp100, Asp102, Glu109, Asp152, Asp154, Asn156, Lys158, and Glu163.

This is Calcium-binding protein E (cbpE) from Dictyostelium discoideum (Social amoeba).